Here is a 283-residue protein sequence, read N- to C-terminus: ESX-1 secretion-associated protein EspG1 (283 aa).

Belongs to the EspG family. Interacts specifically with ESX-1-dependent PE/PPE proteins. Interacts with PPE68.

The protein resides in the cytoplasm. Specific chaperone for cognate PE/PPE proteins. Plays an important role in preventing aggregation of PE/PPE dimers. This chain is ESX-1 secretion-associated protein EspG1, found in Mycobacterium tuberculosis (strain ATCC 25618 / H37Rv).